We begin with the raw amino-acid sequence, 243 residues long: 7-cyano-7-deazaguanine synthase (243 aa).

Residue 14–24 (FSGGQDSATCL) participates in ATP binding. Zn(2+) is bound by residues C202, C217, C220, and C223.

The protein belongs to the QueC family. It depends on Zn(2+) as a cofactor.

It catalyses the reaction 7-carboxy-7-deazaguanine + NH4(+) + ATP = 7-cyano-7-deazaguanine + ADP + phosphate + H2O + H(+). Its pathway is purine metabolism; 7-cyano-7-deazaguanine biosynthesis. Functionally, catalyzes the ATP-dependent conversion of 7-carboxy-7-deazaguanine (CDG) to 7-cyano-7-deazaguanine (preQ(0)). This is 7-cyano-7-deazaguanine synthase from Paraburkholderia phymatum (strain DSM 17167 / CIP 108236 / LMG 21445 / STM815) (Burkholderia phymatum).